We begin with the raw amino-acid sequence, 479 residues long: Bifunctional protein HldE (479 aa).

A ribokinase region spans residues Met1–Thr322. Position 198–201 (Asn198–Glu201) interacts with ATP. Residue Asp267 is part of the active site. The cytidylyltransferase stretch occupies residues Phe347–Ser479.

It in the N-terminal section; belongs to the carbohydrate kinase PfkB family. In the C-terminal section; belongs to the cytidylyltransferase family. Homodimer.

The enzyme catalyses D-glycero-beta-D-manno-heptose 7-phosphate + ATP = D-glycero-beta-D-manno-heptose 1,7-bisphosphate + ADP + H(+). It catalyses the reaction D-glycero-beta-D-manno-heptose 1-phosphate + ATP + H(+) = ADP-D-glycero-beta-D-manno-heptose + diphosphate. The protein operates within nucleotide-sugar biosynthesis; ADP-L-glycero-beta-D-manno-heptose biosynthesis; ADP-L-glycero-beta-D-manno-heptose from D-glycero-beta-D-manno-heptose 7-phosphate: step 1/4. Its pathway is nucleotide-sugar biosynthesis; ADP-L-glycero-beta-D-manno-heptose biosynthesis; ADP-L-glycero-beta-D-manno-heptose from D-glycero-beta-D-manno-heptose 7-phosphate: step 3/4. Functionally, catalyzes the phosphorylation of D-glycero-D-manno-heptose 7-phosphate at the C-1 position to selectively form D-glycero-beta-D-manno-heptose-1,7-bisphosphate. Its function is as follows. Catalyzes the ADP transfer from ATP to D-glycero-beta-D-manno-heptose 1-phosphate, yielding ADP-D-glycero-beta-D-manno-heptose. The sequence is that of Bifunctional protein HldE from Gluconobacter oxydans (strain 621H) (Gluconobacter suboxydans).